Reading from the N-terminus, the 1249-residue chain is ATP-dependent helicase/nuclease subunit A (1249 aa).

The UvrD-like helicase ATP-binding domain occupies 5 to 482; it reads TNYTPSQQAV…IVLAENFRSV (478 aa). ATP is bound at residue 26 to 33; it reads ASAGSGKT. One can recognise a UvrD-like helicase C-terminal domain in the interval 521–811; the sequence is ADMPQTTNLL…NVMTIHGSKG (291 aa).

Belongs to the helicase family. AddA subfamily. In terms of assembly, heterodimer of AddA and AddB/RexB. Mg(2+) is required as a cofactor.

The catalysed reaction is Couples ATP hydrolysis with the unwinding of duplex DNA by translocating in the 3'-5' direction.. It carries out the reaction ATP + H2O = ADP + phosphate + H(+). In terms of biological role, the heterodimer acts as both an ATP-dependent DNA helicase and an ATP-dependent, dual-direction single-stranded exonuclease. Recognizes the chi site generating a DNA molecule suitable for the initiation of homologous recombination. The AddA nuclease domain is required for chi fragment generation; this subunit has the helicase and 3' -&gt; 5' nuclease activities. This Lactiplantibacillus plantarum (strain ATCC BAA-793 / NCIMB 8826 / WCFS1) (Lactobacillus plantarum) protein is ATP-dependent helicase/nuclease subunit A.